We begin with the raw amino-acid sequence, 105 residues long: ATP synthase subunit c (105 aa).

The next 3 helical transmembrane spans lie at 3-23 (FLSLFFLALAGVAFAHDGGMG), 32-52 (SILGAMIGLGIAAFGGAIGMG), and 78-98 (VAMAMIEAQVIYTLVFAIIAI).

The protein belongs to the ATPase C chain family. As to quaternary structure, F-type ATPases have 2 components, F(1) - the catalytic core - and F(0) - the membrane proton channel. F(1) has five subunits: alpha(3), beta(3), gamma(1), delta(1), epsilon(1). F(0) has three main subunits: a(1), b(2) and c(10-14). The alpha and beta chains form an alternating ring which encloses part of the gamma chain. F(1) is attached to F(0) by a central stalk formed by the gamma and epsilon chains, while a peripheral stalk is formed by the delta and b chains.

It localises to the cell inner membrane. Functionally, f(1)F(0) ATP synthase produces ATP from ADP in the presence of a proton or sodium gradient. F-type ATPases consist of two structural domains, F(1) containing the extramembraneous catalytic core and F(0) containing the membrane proton channel, linked together by a central stalk and a peripheral stalk. During catalysis, ATP synthesis in the catalytic domain of F(1) is coupled via a rotary mechanism of the central stalk subunits to proton translocation. In terms of biological role, key component of the F(0) channel; it plays a direct role in translocation across the membrane. A homomeric c-ring of between 10-14 subunits forms the central stalk rotor element with the F(1) delta and epsilon subunits. The sequence is that of ATP synthase subunit c from Helicobacter pylori (strain Shi470).